The chain runs to 117 residues: Urease subunit beta (117 aa).

Residues 95 to 117 (NAVNGKLDGGPHPGVPATERGAK) form a disordered region.

Belongs to the urease beta subunit family. As to quaternary structure, heterotrimer of UreA (gamma), UreB (beta) and UreC (alpha) subunits. Three heterotrimers associate to form the active enzyme.

It is found in the cytoplasm. It carries out the reaction urea + 2 H2O + H(+) = hydrogencarbonate + 2 NH4(+). It functions in the pathway nitrogen metabolism; urea degradation; CO(2) and NH(3) from urea (urease route): step 1/1. The chain is Urease subunit beta from Pseudarthrobacter chlorophenolicus (strain ATCC 700700 / DSM 12829 / CIP 107037 / JCM 12360 / KCTC 9906 / NCIMB 13794 / A6) (Arthrobacter chlorophenolicus).